The chain runs to 1105 residues: Carbamoyl phosphate synthase large chain (1105 aa).

The segment at 1–402 (MPKRDDIEKV…ALGKAVRSLE (402 aa)) is carboxyphosphate synthetic domain. ATP contacts are provided by Arg129, Arg169, Gly175, Gly176, Lys208, Val210, Glu215, Gly241, Ile242, His243, Gln285, and Glu299. The region spanning 133 to 328 (KTAMKNCGLE…IAKISALLAV (196 aa)) is the ATP-grasp 1 domain. Mg(2+) is bound by residues Gln285, Glu299, and Asn301. Residues Gln285, Glu299, and Asn301 each coordinate Mn(2+). The oligomerization domain stretch occupies residues 403–542 (LDIAPKLDLR…STYNGMENET (140 aa)). Residues 543–945 (IPSKRRKIMV…AFAKAQLSAD (403 aa)) are carbamoyl phosphate synthetic domain. An ATP-grasp 2 domain is found at 667 to 858 (AKFLKQSGLS…VAKIAAKTII (192 aa)). ATP is bound by residues Arg703, Lys742, Leu744, Glu749, Gly774, Ile775, His776, Ser777, Gln817, and Glu829. Mg(2+)-binding residues include Gln817, Glu829, and Asn831. The Mn(2+) site is built by Gln817, Glu829, and Asn831. Residues 940 to 1101 (AQLSADGIST…QDIFYAQQNT (162 aa)) enclose the MGS-like domain. The interval 946-1105 (GISTKSLLVT…YAQQNTLLKK (160 aa)) is allosteric domain.

It belongs to the CarB family. Composed of two chains; the small (or glutamine) chain promotes the hydrolysis of glutamine to ammonia, which is used by the large (or ammonia) chain to synthesize carbamoyl phosphate. Tetramer of heterodimers (alpha,beta)4. The cofactor is Mg(2+). Requires Mn(2+) as cofactor.

It catalyses the reaction hydrogencarbonate + L-glutamine + 2 ATP + H2O = carbamoyl phosphate + L-glutamate + 2 ADP + phosphate + 2 H(+). The enzyme catalyses hydrogencarbonate + NH4(+) + 2 ATP = carbamoyl phosphate + 2 ADP + phosphate + 2 H(+). The protein operates within amino-acid biosynthesis; L-arginine biosynthesis; carbamoyl phosphate from bicarbonate: step 1/1. Its pathway is pyrimidine metabolism; UMP biosynthesis via de novo pathway; (S)-dihydroorotate from bicarbonate: step 1/3. Its function is as follows. Large subunit of the glutamine-dependent carbamoyl phosphate synthetase (CPSase). CPSase catalyzes the formation of carbamoyl phosphate from the ammonia moiety of glutamine, carbonate, and phosphate donated by ATP, constituting the first step of 2 biosynthetic pathways, one leading to arginine and/or urea and the other to pyrimidine nucleotides. The large subunit (synthetase) binds the substrates ammonia (free or transferred from glutamine from the small subunit), hydrogencarbonate and ATP and carries out an ATP-coupled ligase reaction, activating hydrogencarbonate by forming carboxy phosphate which reacts with ammonia to form carbamoyl phosphate. This is Carbamoyl phosphate synthase large chain from Pseudothermotoga lettingae (strain ATCC BAA-301 / DSM 14385 / NBRC 107922 / TMO) (Thermotoga lettingae).